Reading from the N-terminus, the 781-residue chain is Catenin beta-1 (781 aa).

Alanine 2 carries the N-acetylalanine modification. The tract at residues 2 to 23 is interaction with VCL; sequence ATQADLMELDMAMEPDRKAAVS. Serine 23 carries the phosphoserine; by GSK3-beta; alternate modification. The O-linked (GlcNAc) serine; alternate glycan is linked to serine 23. Phosphoserine; by GSK3-beta is present on serine 29. A phosphoserine; by GSK3-beta and HIPK2 mark is found at serine 33 and serine 37. The tract at residues 34–56 is disordered; sequence GIHSGATTTAPSLSGKGNPEEED. The residue at position 41 (threonine 41) is a Phosphothreonine; by GSK3-beta. Serine 45 carries the phosphoserine modification. At lysine 49 the chain carries N6-acetyllysine. Phosphotyrosine; by PTK6 is present on tyrosine 64. Phosphotyrosine; by FYN and PTK6 is present on tyrosine 142. 12 ARM repeats span residues 151–191, 193–234, 235–276, 277–318, 319–360, 361–389, 400–441, 442–484, 489–530, 531–571, 594–636, and 637–666; these read RAIP…IMRS, QMVS…IFKS, GGIP…VRLA, GGLQ…ILAS, GGPQ…IVEA, GGMQ…RNLS, GLLG…VCQV, GGIE…AQNA, YGLP…LREQ, GAIP…EIVE, NTIP…AEGA, and TAPL…SEDK. The interval 156–178 is interaction with BCL9; sequence LTKLLNDEDQVVVNKAAVMVHQL. Position 191 is a phosphoserine; by CDK5 (serine 191). Serine 246 is subject to Phosphoserine; by CDK5. A phosphotyrosine mark is found at tyrosine 331 and tyrosine 333. The residue at position 552 (serine 552) is a Phosphoserine; by AMPK. At threonine 556 the chain carries Phosphothreonine. Cysteine 619 is subject to S-nitrosocysteine. Serine 675 is modified (phosphoserine). The segment at 705–781 is disordered; it reads EPLGYRQDDP…NQLAWFDTDL (77 aa). Residues 734-745 are compositionally biased toward basic and acidic residues; the sequence is MMEHEMGGHHPG. The interaction with SCRIB stretch occupies residues 772–781; it reads NQLAWFDTDL.

Belongs to the beta-catenin family. Two separate complex-associated pools are found in the cytoplasm. The majority is present as component of an E-cadherin/ catenin adhesion complex composed of at least E-cadherin/CDH1 and beta-catenin/CTNNB1, and possibly alpha-catenin/CTNNA1; the complex is located to adherens junctions. The stable association of CTNNA1 is controversial as CTNNA1 was shown not to bind to F-actin when assembled in the complex. Alternatively, the CTNNA1-containing complex may be linked to F-actin by other proteins such as LIMA1. Another cytoplasmic pool is part of a large complex containing AXIN1, AXIN2, APC, CSNK1A1 and GSK3B that promotes phosphorylation on N-terminal Ser and Thr residues and ubiquitination of CTNNB1 via BTRC and its subsequent degradation by the proteasome. Wnt-dependent activation of DVL antagonizes the action of GSK3B. When GSK3B activity is inhibited the complex dissociates, CTNNB1 is dephosphorylated and is no longer targeted for destruction. The stabilized protein translocates to the nucleus, where it binds TCF/LEF-1 family members, BCL9, BCL9L and possibly also RUVBL1 and CHD8. Binds CTNNBIP and EP300. CTNNB1 forms a ternary complex with LEF1 and EP300 that is disrupted by CTNNBIP1 binding. Interacts with TAX1BP3 (via the PDZ domain); this interaction inhibits the transcriptional activity of CTNNB1. Interacts with AJAP1, BAIAP1, CARM1, CTNNA3, CXADR and PCDH11Y. Binds NHERF1. Interacts with GLIS2 and SLC30A9. Interacts with XIRP1 and MUC1. Interacts with PTPRU (via the cytoplasmic juxtamembrane domain) and with EMD. Interacts with SCRIB. Interacts with TNIK. Interacts with SESTD1 and TRPC4. Interacts directly with AXIN1; the interaction is regulated by CDK2 phosphorylation of AXIN1. Interacts with CAV1. Interacts with TRPV4. The TRPV4 and CTNNB1 complex can interact with CDH1. Interacts with VCL. Interacts with PTPRJ. Interacts with PKT7. Interacts with FAT1 (via the cytoplasmic domain). Interacts with NANOS1 and NDRG2. Interacts with NEK2, CDK2 and CDK5. Interacts with PTK6. Interacts with SOX7; this interaction may lead to proteasomal degradation of active CTNNB1 and thus inhibition of Wnt/beta-catenin-stimulated transcription. Identified in a complex with HINT1 and MITF. Interacts with FHIT. The CTNNB1 and TCF4 complex interacts with PML. Interacts with FERMT2. Identified in a complex with TCF4 and FERMT2. Interacts with RORA. May interact with P-cadherin/CDH3. Interacts with RAPGEF2. Interacts with RNF220. Interacts with CTNND2. Interacts (via the C-terminal region) with CBY1. The complex composed, at least, of APC, CTNNB1 and GSK3B interacts with JPT1; the interaction requires the inactive form of GSK3B (phosphorylated at 'Ser-9'). Interacts with DLG5. Interacts with FAM53B; promoting translocation to the nucleus. Interacts with TMEM170B. Interacts with AHI1. Interacts with GID8. Component of an cadherin:catenin adhesion complex composed of at least of CDH26, beta-catenin/CTNNB1, alpha-catenin/CTNNA1 and p120 catenin/CTNND1. Forms a complex comprising APPL1, RUVBL2, APPL2, HDAC1 and HDAC2. Interacts with IRF2BPL; mediates the ubiquitination and degradation of CTNNB1. Interacts with LMBR1L and AMFR. Interacts with LMBR1L. Interacts with SOX30; prevents interaction of CTNNB1 with TCF7L2/TCF4 and leads to inhibition of Wnt signaling. Interacts with SOX9; inhibiting CTNNB1 activity by competing with the binding sites of TCF/LEF within CTNNB1, thereby inhibiting the Wnt signaling. Interacts with SPN/CD43 cytoplasmic tail. Interacts (when phosphorylated at Tyr-333) with isoform M2 of PKM (PKM2); promoting transcription activation. Interacts with PKP2 (via HEAD domain). Interacts with CDH1. Interacts (when unphosphorylated) with FLYWCH1, perhaps preventing interaction of CTNNB1 with TCF4, and thereby regulating transcription activation; phosphorylation of CTNNB1 may inhibit the interaction. Interacts (via the central armadillo domains) with probable transcriptional regulator ADNP (via N-terminal region); interaction is direct and stabilizes CTNNB1 by modulating its phosphorylation by glycogen synthase kinase-3 beta GSK3B. Interacts with NR5A2. Interacts with DSG2; the interaction promotes localization of CTNNB1 at cell junctions thus reducing its nuclear localization and subsequent transcription of CTNNB1/TCF-target genes. In terms of processing, phosphorylation by GSK3B requires prior phosphorylation of Ser-45 by another kinase. Phosphorylation proceeds then from Thr-41 to Ser-33. Phosphorylated by NEK2. EGF stimulates tyrosine phosphorylation. Phosphorylated on Ser-33 and Ser-37 by HIPK2. This phosphorylation triggers proteasomal degradation. Phosphorylation at Ser-552 by AMPK promotes stabilization of the protein, enhancing TCF/LEF-mediated transcription. Phosphorylation on Ser-191 and Ser-246 by CDK5. Phosphorylation by CDK2 regulates insulin internalization. Phosphorylation by PTK6 at Tyr-64, Tyr-142, Tyr-331 and/or Tyr-333 with the predominant site at Tyr-64 is not essential for inhibition of transcriptional activity. Phosphorylation by SRC at Tyr-333 promotes interaction with isoform M2 of PKM (PKM2); promoting transcription activation. Post-translationally, ubiquitinated by the SCF(BTRC) E3 ligase complex when phosphorylated by GSK3B, leading to its degradation. Ubiquitinated by a E3 ubiquitin ligase complex containing UBE2D1, SIAH1, CACYBP/SIP, SKP1, APC and TBL1X, leading to its subsequent proteasomal degradation. Ubiquitinated and degraded following interaction with SOX9. Ubiquitinated via 'Lys-11'- and 'Lys-29'-linked ubiquitin chains by UBR5, leading to its stabilization. S-nitrosylation at Cys-619 within adherens junctions promotes VEGF-induced, NO-dependent endothelial cell permeability by disrupting interaction with E-cadherin, thus mediating disassembly adherens junctions. In terms of processing, O-glycosylation at Ser-23 decreases nuclear localization and transcriptional activity, and increases localization to the plasma membrane and interaction with E-cadherin CDH1. Post-translationally, deacetylated at Lys-49 by SIRT1.

It is found in the cytoplasm. The protein localises to the nucleus. The protein resides in the cytoskeleton. Its subcellular location is the cell junction. It localises to the adherens junction. It is found in the cell membrane. The protein localises to the microtubule organizing center. The protein resides in the centrosome. Its subcellular location is the spindle pole. It localises to the synapse. It is found in the cilium basal body. Its function is as follows. Key downstream component of the canonical Wnt signaling pathway. In the absence of Wnt, forms a complex with AXIN1, AXIN2, APC, CSNK1A1 and GSK3B that promotes phosphorylation on N-terminal Ser and Thr residues and ubiquitination of CTNNB1 via BTRC and its subsequent degradation by the proteasome. In the presence of Wnt ligand, CTNNB1 is not ubiquitinated and accumulates in the nucleus, where it acts as a coactivator for transcription factors of the TCF/LEF family, leading to activate Wnt responsive genes. Also acts as a coactivator for other transcription factors, such as NR5A2. Promotes epithelial to mesenchymal transition/mesenchymal to epithelial transition (EMT/MET) via driving transcription of CTNNB1/TCF-target genes. Involved in the regulation of cell adhesion, as component of an E-cadherin:catenin adhesion complex. Acts as a negative regulator of centrosome cohesion. Involved in the CDK2/PTPN6/CTNNB1/CEACAM1 pathway of insulin internalization. Blocks anoikis of malignant kidney and intestinal epithelial cells and promotes their anchorage-independent growth by down-regulating DAPK2. Disrupts PML function and PML-NB formation by inhibiting RANBP2-mediated sumoylation of PML. Promotes neurogenesis by maintaining sympathetic neuroblasts within the cell cycle. Involved in chondrocyte differentiation via interaction with SOX9: SOX9-binding competes with the binding sites of TCF/LEF within CTNNB1, thereby inhibiting the Wnt signaling. Acts as a positive regulator of odontoblast differentiation during mesenchymal tooth germ formation, via promoting the transcription of differentiation factors such as LEF1, BMP2 and BMP4. Activity is repressed in a MSX1-mediated manner at the bell stage of mesenchymal tooth germ formation which prevents premature differentiation of odontoblasts. The polypeptide is Catenin beta-1 (Bos taurus (Bovine)).